A 91-amino-acid chain; its full sequence is Bacterial microcompartment shell protein PduJ (91 aa).

The BMC domain occupies Ala4–Pro88.

This sequence belongs to the bacterial microcompartments protein family. In terms of assembly, homohexamer with a central pore of about 5.7 Angstroms in diameter. Interacts with PduP, which targets PduP to the BMC.

It is found in the bacterial microcompartment. The protein operates within polyol metabolism; 1,2-propanediol degradation. In terms of biological role, one of the major shell proteins of the bacterial microcompartment (BMC) dedicated to 1,2-propanediol (1,2-PD) degradation. The isolated BMC shell component protein ratio for J:A:B':B:K:T:U is approximately 15:10:7:6:1:1:2. At least one of PduA or PduJ is required for BMC assembly; it must be encoded as the first gene in the pdu operon. Required for structural integrity of BMCs and to mitigate propionaldehyde toxicity, probably joins facets responsible for BMC closure. Edge residues (particularly Lys-25) are important for function and assembly of the BMC. 80% identical to PduA; although their pore regions appear structurally identical, unlike PduA plays no role in 1,2-PD diffusion into or out of the BMC shell. If pduJ is cloned in the chromosomal position of pduA it is able to complement a pduA deletion; it then has a functional pore as it assumes the transport functions of PduA. Overexpression of this protein leads to aberrant filaments that extend the length of the cell, cross the cleavage furrow and impair division. The filaments form nanotubes with a hollow center. Modeling suggests PduJ is probably the hub for binding multiple enzymes to the interior of the BMC; modeling suggests PduC, PduD, PduG and PduM are targeted to PduJ. The 1,2-propanediol (1,2-PD) degradation bacterial microcompartment (BMC) concentrates low levels of 1,2-PD catabolic enzymes, concentrates volatile reaction intermediates thus enhancing pathway flux and keeps the level of toxic, mutagenic propionaldehyde low. The sequence is that of Bacterial microcompartment shell protein PduJ from Salmonella typhimurium (strain LT2 / SGSC1412 / ATCC 700720).